The primary structure comprises 191 residues: Thymidine kinase (191 aa).

Residues 15 to 22 and 88 to 91 contribute to the ATP site; these read GPMYSGKT and DEAQ. The active-site Proton acceptor is the E89. Residues C145, C148, C183, and C186 each contribute to the Zn(2+) site.

This sequence belongs to the thymidine kinase family. In terms of assembly, homotetramer.

Its subcellular location is the cytoplasm. The enzyme catalyses thymidine + ATP = dTMP + ADP + H(+). The polypeptide is Thymidine kinase (Clostridium botulinum (strain Kyoto / Type A2)).